A 264-amino-acid chain; its full sequence is Small ribosomal subunit protein uS2 (264 aa).

The tract at residues 222–246 is disordered; it reads GRSENKDEQNEQGEQIAPVTNEEKQ.

The protein belongs to the universal ribosomal protein uS2 family.

This is Small ribosomal subunit protein uS2 from Helicobacter hepaticus (strain ATCC 51449 / 3B1).